The sequence spans 78 residues: uncharacterized protein (78 aa).

Positions 1–27 (MQNSKTDMCAALWAVTGLVLNVAVRFA) are cleaved as a signal peptide.

This is an uncharacterized protein from Dryophytes versicolor (chameleon treefrog).